The chain runs to 122 residues: Large ribosomal subunit protein uL22 (122 aa).

The protein belongs to the universal ribosomal protein uL22 family. In terms of assembly, part of the 50S ribosomal subunit.

In terms of biological role, this protein binds specifically to 23S rRNA; its binding is stimulated by other ribosomal proteins, e.g. L4, L17, and L20. It is important during the early stages of 50S assembly. It makes multiple contacts with different domains of the 23S rRNA in the assembled 50S subunit and ribosome. Its function is as follows. The globular domain of the protein is located near the polypeptide exit tunnel on the outside of the subunit, while an extended beta-hairpin is found that lines the wall of the exit tunnel in the center of the 70S ribosome. The sequence is that of Large ribosomal subunit protein uL22 from Caldicellulosiruptor saccharolyticus (strain ATCC 43494 / DSM 8903 / Tp8T 6331).